An 89-amino-acid chain; its full sequence is Putative membrane protein insertion efficiency factor (89 aa).

Residues 69–89 (DPVPPAHTERGGTMCPSRLPE) form a disordered region.

Belongs to the UPF0161 family.

It localises to the cell inner membrane. Functionally, could be involved in insertion of integral membrane proteins into the membrane. The polypeptide is Putative membrane protein insertion efficiency factor (Paramagnetospirillum magneticum (strain ATCC 700264 / AMB-1) (Magnetospirillum magneticum)).